A 331-amino-acid polypeptide reads, in one-letter code: 6-phosphogluconolactonase (331 aa).

Lysine 287 is modified (N6-acetyllysine).

The protein belongs to the cycloisomerase 2 family.

The catalysed reaction is 6-phospho-D-glucono-1,5-lactone + H2O = 6-phospho-D-gluconate + H(+). Its pathway is carbohydrate degradation; pentose phosphate pathway; D-ribulose 5-phosphate from D-glucose 6-phosphate (oxidative stage): step 2/3. Its function is as follows. Catalyzes the hydrolysis of 6-phosphogluconolactone to 6-phosphogluconate. This is 6-phosphogluconolactonase from Escherichia coli O6:K15:H31 (strain 536 / UPEC).